Here is a 372-residue protein sequence, read N- to C-terminus: Putative glutamate--cysteine ligase 2 (372 aa).

Belongs to the glutamate--cysteine ligase type 2 family. YbdK subfamily. In terms of assembly, homodimer.

It catalyses the reaction L-cysteine + L-glutamate + ATP = gamma-L-glutamyl-L-cysteine + ADP + phosphate + H(+). Its function is as follows. ATP-dependent carboxylate-amine ligase which exhibits weak glutamate--cysteine ligase activity. This Salmonella agona (strain SL483) protein is Putative glutamate--cysteine ligase 2 (ybdK).